Here is a 475-residue protein sequence, read N- to C-terminus: Tubulin epsilon chain (475 aa).

A GTP-binding site is contributed by 148 to 154 (GGGTGSG).

Belongs to the tubulin family. As to quaternary structure, found in a complex with TEDC1, TEDC2, TUBE1 and TUBD1.

The protein localises to the cytoplasm. Its subcellular location is the cytoskeleton. It localises to the microtubule organizing center. It is found in the centrosome. This chain is Tubulin epsilon chain (TUBE1), found in Homo sapiens (Human).